A 258-amino-acid polypeptide reads, in one-letter code: Distal membrane-arm assembly complex protein 2 (258 aa).

Belongs to the ATP synthase subunit s family. Interacts with incompletely assembled mitochondrial NADH:ubiquinone oxidoreductase complex (complex I).

The protein localises to the mitochondrion. Its function is as follows. Required for the assembly of the mitochondrial NADH:ubiquinone oxidoreductase complex (complex I). Involved in the assembly of the distal region of complex I. This is Distal membrane-arm assembly complex protein 2 (Dmac2) from Mus musculus (Mouse).